An 872-amino-acid chain; its full sequence is DNA mismatch repair protein MutS (872 aa).

A compositionally biased stretch (polar residues) spans 1-17 (MSISKIESVNAEKQSPV). Positions 1 to 22 (MSISKIESVNAEKQSPVGTEIG) are disordered. 632–639 (GPNMGGKS) is a binding site for ATP.

This sequence belongs to the DNA mismatch repair MutS family.

This protein is involved in the repair of mismatches in DNA. It is possible that it carries out the mismatch recognition step. This protein has a weak ATPase activity. The chain is DNA mismatch repair protein MutS from Azoarcus sp. (strain BH72).